Consider the following 862-residue polypeptide: Dipeptidyl peptidase 9 (862 aa).

Residues S729, D807, and H839 each act as charge relay system in the active site. S729 is a Val-boroPro binding site.

The protein belongs to the peptidase S9B family. DPPIV subfamily. In terms of assembly, homodimer. Forms a ternary complex with NLRP1, composed of a DPP9 homodimer, one full-length NLRP1 protein, and one cleaved C-terminus of NLRP1 (NACHT, LRR and PYD domains-containing protein 1, C-terminus). Forms a ternary complex with CARD8, composed of a DPP9 homodimer, one full-length NLRP1 protein, and one cleaved C-terminus of CARD8 (Caspase recruitment domain-containing protein 8, C-terminus). In the ternary complex, only one subunit of the DPP9 homodimer is bound to NLRP1 or CARD8. As to expression, detected in kidney, skin, brain, thymus and liver (at protein level).

Its subcellular location is the cytoplasm. It localises to the cytosol. It carries out the reaction Release of an N-terminal dipeptide, Xaa-Yaa-|-Zaa-, from a polypeptide, preferentially when Yaa is Pro, provided Zaa is neither Pro nor hydroxyproline.. With respect to regulation, inhibited by the serine proteinase inhibitor 4-(2-aminoethyl)benzenesulphonyl fluoride (AEBSF), and by di-isopropylfluorophosphate. Inhibited by Val-boroPro (Talabostat, PT-100), a non-selective inhibitor, which triggers pyroptosis in monocytes and macrophages. Val-boroPro inhibits activity by binding to the active site, mimicking a substrate-bound state, thereby displacing the C-terminal fragment of NLRP1, leading to activation of the NLRP1 inflammasome. In contrast, Val-boroPro does not directly displaces CARD8: it acts by promoting degradation of the N-terminal part of CARD8, leading to indirect disruption of the ternary complex. Its function is as follows. Dipeptidyl peptidase that cleaves off N-terminal dipeptides from proteins having a Pro or Ala residue at position 2. Acts as a key inhibitor of caspase-1-dependent monocyte and macrophage pyroptosis in resting cells by preventing activation of NLRP1 and CARD8. Sequesters the cleaved C-terminal part of NLRP1 and CARD8, which respectively constitute the active part of the NLRP1 and CARD8 inflammasomes, in a ternary complex, thereby preventing their oligomerization and activation. The dipeptidyl peptidase activity is required to suppress NLRP1 and CARD8; however, neither NLRP1 nor CARD8 are bona fide substrates of DPP9, suggesting the existence of substrate(s) required for NLRP1 and CARD8 inhibition. The sequence is that of Dipeptidyl peptidase 9 from Mus musculus (Mouse).